A 161-amino-acid chain; its full sequence is MEYTGSKYIGEYVDGRMEGKAKYILPTETIYVGEMKDGMFHGEGTLYFPSGSQYDAIWENGLAIKGTYTFSDGLHYDEKNWHYCDGYDRRFYTEILNGLKPAGMAQLTNMDPPRKIPKGYYDCGDGFYNPVTRVVKDYRNRFLRNADDDEHEWITRTCRKG.

MORN repeat units follow at residues 8 to 30, 31 to 53, and 54 to 75; these read YIGE…TETI, YVGE…SGSQ, and YDAI…DGLH.

Expressed in sperm (at protein level).

The protein localises to the cell projection. Its subcellular location is the cilium. It localises to the flagellum. The sequence is that of MORN repeat-containing protein 5 (MORN5) from Homo sapiens (Human).